The primary structure comprises 417 residues: Gamma-glutamyl phosphate reductase (417 aa).

It belongs to the gamma-glutamyl phosphate reductase family.

The protein resides in the cytoplasm. The enzyme catalyses L-glutamate 5-semialdehyde + phosphate + NADP(+) = L-glutamyl 5-phosphate + NADPH + H(+). It functions in the pathway amino-acid biosynthesis; L-proline biosynthesis; L-glutamate 5-semialdehyde from L-glutamate: step 2/2. Catalyzes the NADPH-dependent reduction of L-glutamate 5-phosphate into L-glutamate 5-semialdehyde and phosphate. The product spontaneously undergoes cyclization to form 1-pyrroline-5-carboxylate. In Escherichia coli O6:H1 (strain CFT073 / ATCC 700928 / UPEC), this protein is Gamma-glutamyl phosphate reductase.